A 198-amino-acid polypeptide reads, in one-letter code: Ribonuclease HII (198 aa).

Residues 11 to 198 (NLIAGVDEVG…GPVKRVLGLV (188 aa)) enclose the RNase H type-2 domain. D17, E18, and D109 together coordinate a divalent metal cation.

This sequence belongs to the RNase HII family. The cofactor is Mn(2+). Requires Mg(2+) as cofactor.

It is found in the cytoplasm. It carries out the reaction Endonucleolytic cleavage to 5'-phosphomonoester.. Endonuclease that specifically degrades the RNA of RNA-DNA hybrids. The sequence is that of Ribonuclease HII from Yersinia pseudotuberculosis serotype O:1b (strain IP 31758).